The chain runs to 205 residues: Macrophage immunometabolism regulator (205 aa).

The tract at residues 1-40 (MEVDINGVNRTNNSVPSTTEGSSPSKPDPEKPRCSSTPCS) is disordered. A compositionally biased stretch (polar residues) spans 8 to 25 (VNRTNNSVPSTTEGSSPS).

It belongs to the UNC119-binding protein family. In terms of assembly, interacts with unc119 family proteins; interaction preferentially takes place when unc119 proteins are unliganded with myristoylated proteins.

It localises to the cytoplasm. Its subcellular location is the cell projection. It is found in the cilium. Functionally, may play a role in immune regulation through regulation of the macrophage function. May also play a role in trafficking of proteins via its interaction with unc119 family cargo adapters. May play a role in ciliary membrane localization. The chain is Macrophage immunometabolism regulator (macir) from Xenopus tropicalis (Western clawed frog).